The primary structure comprises 244 residues: RNA transcription, translation and transport factor protein (244 aa).

Lysine 20, lysine 62, and lysine 98 each carry N6-acetyllysine.

The protein belongs to the RTRAF family. Homodimer. Interacts with FAM98A (via N- and C-terminus). Interacts with NIN; which may prevent phosphorylation of NIN. Interacts with POLR2A. Component of a tRNA-splicing ligase complex with FAM98B, DDX1 and RTCB. In terms of assembly, (Microbial infection) Interacts with influenza A virus (IAV) RNA polymerase subunits PA, PB1 and PB2, and nucleocapsid NP. Associates with IAV polymerase complexes both in the nucleus and cytosol. Associates with IAV ribonucleoproteins (vRNP) packaged in virions. Interacts with hepatitis C virus core protein p19. In terms of tissue distribution, widely expressed. Expressed at high level in heart and skeletal muscle. Expressed at intermediate level in liver, pancreas, fetal brain and fetal lung. Weakly expressed in adult brain, adult lung, placenta, fetal liver and fetal kidney. Overexpressed in many brain tumors.

Its subcellular location is the nucleus. It is found in the cytoplasm. The protein localises to the cytosol. The protein resides in the perinuclear region. It localises to the cytoskeleton. Its subcellular location is the microtubule organizing center. It is found in the centrosome. Its function is as follows. RNA-binding protein involved in modulation of mRNA transcription by Polymerase II. Component of the tRNA-splicing ligase complex and is required for tRNA ligation. May be required for RNA transport. Functionally, (Microbial infection) In case of infection by influenza virus A (IVA), is involved in viral replication. In Homo sapiens (Human), this protein is RNA transcription, translation and transport factor protein.